Reading from the N-terminus, the 194-residue chain is Holliday junction branch migration complex subunit RuvA (194 aa).

A domain I region spans residues 1 to 63 (MFEYLYGTVE…EDTYKLIGFL (63 aa)). Residues 64 to 142 (DERDRKIFEL…NLTYTEEETV (79 aa)) form a domain II region. A flexible linker region spans residues 143–147 (SMDML). The domain III stretch occupies residues 147 to 194 (LEDLVLALEGLGYNKKEIDKTLEKIDLNKFSSLEDAIKGILKNMRIGD).

The protein belongs to the RuvA family. In terms of assembly, homotetramer. Forms an RuvA(8)-RuvB(12)-Holliday junction (HJ) complex. HJ DNA is sandwiched between 2 RuvA tetramers; dsDNA enters through RuvA and exits via RuvB. An RuvB hexamer assembles on each DNA strand where it exits the tetramer. Each RuvB hexamer is contacted by two RuvA subunits (via domain III) on 2 adjacent RuvB subunits; this complex drives branch migration. In the full resolvosome a probable DNA-RuvA(4)-RuvB(12)-RuvC(2) complex forms which resolves the HJ.

Its subcellular location is the cytoplasm. The RuvA-RuvB-RuvC complex processes Holliday junction (HJ) DNA during genetic recombination and DNA repair, while the RuvA-RuvB complex plays an important role in the rescue of blocked DNA replication forks via replication fork reversal (RFR). RuvA specifically binds to HJ cruciform DNA, conferring on it an open structure. The RuvB hexamer acts as an ATP-dependent pump, pulling dsDNA into and through the RuvAB complex. HJ branch migration allows RuvC to scan DNA until it finds its consensus sequence, where it cleaves and resolves the cruciform DNA. In Fusobacterium nucleatum subsp. nucleatum (strain ATCC 25586 / DSM 15643 / BCRC 10681 / CIP 101130 / JCM 8532 / KCTC 2640 / LMG 13131 / VPI 4355), this protein is Holliday junction branch migration complex subunit RuvA.